The chain runs to 128 residues: Holo-[acyl-carrier-protein] synthase (128 aa).

Mg(2+)-binding residues include aspartate 8 and glutamate 60.

Belongs to the P-Pant transferase superfamily. AcpS family. Mg(2+) is required as a cofactor.

The protein localises to the cytoplasm. The catalysed reaction is apo-[ACP] + CoA = holo-[ACP] + adenosine 3',5'-bisphosphate + H(+). Functionally, transfers the 4'-phosphopantetheine moiety from coenzyme A to a Ser of acyl-carrier-protein. The protein is Holo-[acyl-carrier-protein] synthase of Anaeromyxobacter dehalogenans (strain 2CP-C).